A 260-amino-acid chain; its full sequence is Adenosylcobinamide-GDP ribazoletransferase (260 aa).

7 helical membrane-spanning segments follow: residues 42-62, 68-88, 118-137, 144-166, 180-200, 201-221, and 237-257; these read TWAL…VYKI, LTPN…TGAL, IGTY…WSAL, WLVT…AFMS, AGAP…LVLT, LALG…AGLI, and ILGA…AAFQ.

The protein belongs to the CobS family. It depends on Mg(2+) as a cofactor.

It localises to the cell inner membrane. It carries out the reaction alpha-ribazole + adenosylcob(III)inamide-GDP = adenosylcob(III)alamin + GMP + H(+). The enzyme catalyses alpha-ribazole 5'-phosphate + adenosylcob(III)inamide-GDP = adenosylcob(III)alamin 5'-phosphate + GMP + H(+). It participates in cofactor biosynthesis; adenosylcobalamin biosynthesis; adenosylcobalamin from cob(II)yrinate a,c-diamide: step 7/7. In terms of biological role, joins adenosylcobinamide-GDP and alpha-ribazole to generate adenosylcobalamin (Ado-cobalamin). Also synthesizes adenosylcobalamin 5'-phosphate from adenosylcobinamide-GDP and alpha-ribazole 5'-phosphate. In Bradyrhizobium diazoefficiens (strain JCM 10833 / BCRC 13528 / IAM 13628 / NBRC 14792 / USDA 110), this protein is Adenosylcobinamide-GDP ribazoletransferase.